A 730-amino-acid chain; its full sequence is Neuroligin-like protein glit-1 (730 aa).

The signal sequence occupies residues 1-18; it reads MFTGTIFNSLFTLPLVIS. Over 19 to 663 the chain is Extracellular; that stretch reads QFVPPPTRPV…EIMVFKWITG (645 aa). Residues asparagine 103, asparagine 320, asparagine 445, asparagine 512, asparagine 557, asparagine 564, and asparagine 604 are each glycosylated (N-linked (GlcNAc...) asparagine). A helical transmembrane segment spans residues 664 to 684; sequence VNVIIIALLIVLAGAFGYMVW. Residues 685–730 lie on the Cytoplasmic side of the membrane; the sequence is GNKEDEEAAYKAENHQLVEYRDTGHSVSDATISSRTRSPRSRITNL.

The protein belongs to the type-B carboxylesterase/lipase family. In terms of tissue distribution, expressed in the pharynx, intestine, and in several cells in the head including dopaminergic neurons.

It is found in the cell membrane. Its function is as follows. Probable neuronal cell surface protein thought to be involved in cell-cell-interactions. Confers protection against oxidative stress. Plays a role in protecting dopaminergic neurons against oxidative stress-induced neurodegeneration. This chain is Neuroligin-like protein glit-1, found in Caenorhabditis elegans.